Reading from the N-terminus, the 497-residue chain is Probable cytosol aminopeptidase (497 aa).

Positions 267 and 272 each coordinate Mn(2+). The active site involves lysine 279. Positions 290, 349, and 351 each coordinate Mn(2+). The active site involves arginine 353.

It belongs to the peptidase M17 family. Mn(2+) is required as a cofactor.

The protein resides in the cytoplasm. The catalysed reaction is Release of an N-terminal amino acid, Xaa-|-Yaa-, in which Xaa is preferably Leu, but may be other amino acids including Pro although not Arg or Lys, and Yaa may be Pro. Amino acid amides and methyl esters are also readily hydrolyzed, but rates on arylamides are exceedingly low.. It catalyses the reaction Release of an N-terminal amino acid, preferentially leucine, but not glutamic or aspartic acids.. Presumably involved in the processing and regular turnover of intracellular proteins. Catalyzes the removal of unsubstituted N-terminal amino acids from various peptides. The protein is Probable cytosol aminopeptidase of Pseudomonas putida (strain ATCC 47054 / DSM 6125 / CFBP 8728 / NCIMB 11950 / KT2440).